Here is a 473-residue protein sequence, read N- to C-terminus: G2/mitotic-specific cyclin-1 (473 aa).

Over residues 1 to 12 (MGSRNIVQQQNR) the composition is skewed to polar residues. 2 disordered regions span residues 1-23 (MGSRNIVQQQNRAEAAVPGAMKQ) and 134-155 (KEKPIEKEKAAEKSAKKKAPTL). Over residues 134–147 (KEKPIEKEKAAEKS) the composition is skewed to basic and acidic residues.

This sequence belongs to the cyclin family. Cyclin AB subfamily. Interacts with the CDC2 and CDK2 protein kinases to form a serine/threonine kinase holoenzyme complex. The cyclin subunit imparts substrate specificity to the complex.

Essential for the control of the cell cycle at the G2/M (mitosis) transition. G2/M cyclins accumulate steadily during G2 and are abruptly destroyed at mitosis. The chain is G2/mitotic-specific cyclin-1 from Antirrhinum majus (Garden snapdragon).